Consider the following 33-residue polypeptide: Potassium channel toxin alpha-KTx 24.1 (33 aa).

4 disulfide bridges follow: cysteine 4/cysteine 23, cysteine 9/cysteine 28, cysteine 13/cysteine 30, and cysteine 18/cysteine 33.

Belongs to the short scorpion toxin superfamily. Potassium channel inhibitor family. Alpha-KTx 24 subfamily. Contains 4 disulfide bonds. In terms of tissue distribution, expressed by the venom gland.

It is found in the secreted. Reversibly blocks voltage-gated potassium channels Kv1.2/KCNA2, Kv1.3/KCNA3 and, weakly, Shaker B. The sequence is that of Potassium channel toxin alpha-KTx 24.1 from Pandinus imperator (Emperor scorpion).